The following is a 62-amino-acid chain: Large ribosomal subunit protein eL37 (62 aa).

Zn(2+)-binding residues include cysteine 20, cysteine 23, cysteine 35, and cysteine 38. Residues 20-38 (CRRCGRRAYHVRKGYCAAC) form a C4-type zinc finger.

The protein belongs to the eukaryotic ribosomal protein eL37 family. Zn(2+) serves as cofactor.

In terms of biological role, binds to the 23S rRNA. In Methanopyrus kandleri (strain AV19 / DSM 6324 / JCM 9639 / NBRC 100938), this protein is Large ribosomal subunit protein eL37.